The sequence spans 352 residues: Peptide chain release factor 1 (352 aa).

N5-methylglutamine is present on Gln229.

This sequence belongs to the prokaryotic/mitochondrial release factor family. In terms of processing, methylated by PrmC. Methylation increases the termination efficiency of RF1.

The protein resides in the cytoplasm. In terms of biological role, peptide chain release factor 1 directs the termination of translation in response to the peptide chain termination codons UAG and UAA. The sequence is that of Peptide chain release factor 1 from Gluconacetobacter diazotrophicus (strain ATCC 49037 / DSM 5601 / CCUG 37298 / CIP 103539 / LMG 7603 / PAl5).